A 140-amino-acid polypeptide reads, in one-letter code: FAD synthase (140 aa).

Residues 9–10 (TF), 14–17 (HPGH), asparagine 92, and tyrosine 119 contribute to the ATP site.

It belongs to the archaeal FAD synthase family. Homodimer. The cofactor is a divalent metal cation.

It carries out the reaction FMN + ATP + H(+) = FAD + diphosphate. Its pathway is cofactor biosynthesis; FAD biosynthesis; FAD from FMN: step 1/1. In terms of biological role, catalyzes the transfer of the AMP portion of ATP to flavin mononucleotide (FMN) to produce flavin adenine dinucleotide (FAD) coenzyme. In Methanocorpusculum labreanum (strain ATCC 43576 / DSM 4855 / Z), this protein is FAD synthase.